The following is a 204-amino-acid chain: Large ribosomal subunit protein eL15 (204 aa).

This sequence belongs to the eukaryotic ribosomal protein eL15 family. Component of the large ribosomal subunit.

The protein localises to the cytoplasm. In terms of biological role, component of the large ribosomal subunit. The ribosome is a large ribonucleoprotein complex responsible for the synthesis of proteins in the cell. This Tachysurus fulvidraco (Yellow catfish) protein is Large ribosomal subunit protein eL15 (rpl15).